We begin with the raw amino-acid sequence, 633 residues long: MGKVVGIDLGTTNSCVAVMEGGKPTVIANAEGFRTTPSVVAYTKNQDQLVGQIAKRQAVMNPENTFYSAKRFVGRRVDEVNEESKEVSYSVEKSGSSVKLKCPVLDKQFSPEEVAAQVLRKLSEDAGKYLGENINQAVITVPAYFNDSQRQATKDAGKIAGLEVLRIINEPTAAALAYGLDRKSNERILVFDLGGGTFDVSVLEVGDGVFEVLSTSGDTHLGGDDFDKVIVDHLAATFKANEGIDLRQDKQALQRLTEAAEKAKIELSNATQSEINLPFITATPEGPKHVDLTLTRAKFEELASNLIDRCRVPVEQALKDAKLSTGEIDEIVMVGGSTRMPAVKELVKRVTGKDPNQTVNPDEVVAVGAAIQGGVLAGEVKDILLLDVTPLSLGVETLGGVMTKMITRNTTVPTKKTETYSTAVDGQTNVEIHVLQGEREMASDNKSLGTFRLDGIPPSPRGVPQIEVTFDIDANGILSVTAKDKGSGKEQSISITGASTLSDNEVEKMVKDAETNATADKEKRDRIDIKNQAETLVYQTEKQLGELGDKVDEEAKAKVEAKRIQLKEATEKDDYETMKTLVEDLQKELYSLGASVYQQSNAASQAADGTSSESNNSTEGNDDVIDAEFTESK.

Thr197 is subject to Phosphothreonine; by autocatalysis. The disordered stretch occupies residues 600–633 (SNAASQAADGTSSESNNSTEGNDDVIDAEFTESK). The span at 608 to 619 (DGTSSESNNSTE) shows a compositional bias: low complexity. Residues 620–633 (GNDDVIDAEFTESK) are compositionally biased toward acidic residues.

The protein belongs to the heat shock protein 70 family.

Functionally, acts as a chaperone. The protein is Chaperone protein dnaK2 (dnaK2) of Prochlorococcus marinus (strain SARG / CCMP1375 / SS120).